The primary structure comprises 590 residues: Potassium-transporting ATPase potassium-binding subunit (590 aa).

Helical transmembrane passes span A3–G23, H63–Q83, G134–I154, V177–I197, F284–M304, W312–A332, F359–V379, A388–V408, G411–G431, I451–T471, L515–M535, and L558–A578.

The protein belongs to the KdpA family. As to quaternary structure, the system is composed of three essential subunits: KdpA, KdpB and KdpC.

The protein localises to the cell inner membrane. Functionally, part of the high-affinity ATP-driven potassium transport (or Kdp) system, which catalyzes the hydrolysis of ATP coupled with the electrogenic transport of potassium into the cytoplasm. This subunit binds the periplasmic potassium ions and delivers the ions to the membrane domain of KdpB through an intramembrane tunnel. This chain is Potassium-transporting ATPase potassium-binding subunit, found in Ralstonia pickettii (strain 12J).